We begin with the raw amino-acid sequence, 409 residues long: Tetracenomycin polyketide synthase ketoacyl synthase beta subunit (409 aa).

The Ketosynthase family 3 (KS3) domain occupies 4–407 (PAPVVVTGLG…GFNSALVVRR (404 aa)).

This sequence belongs to the thiolase-like superfamily. Beta-ketoacyl-ACP synthases family. The tetracenomycin polyketide synthase (TCM PKS) is composed of a ketosynthase complex (TcmKL), an acyl carrier protein (TcmM), a cyclase (TcmN) and a probable second cyclase (TcmJ). TcmK and TcmL form a heterodimeric complex.

It carries out the reaction 10 malonyl-CoA + 8 H(+) = tetracenomycin F2 + 10 CO2 + 10 CoA + 2 H2O. It functions in the pathway antibiotic biosynthesis; tetracenomycin C biosynthesis. In terms of biological role, involved in the biosynthesis of tetracenomycin C (TCM C). Part of a type II polyketide synthase (PKS) that catalyzes the synthesis of tetracenomycin F2 (TCM F2), a precursor of TCM C, from malonyl-CoA. TcmK and TcmL form a heterodimeric alpha-beta complex that catalyzes the condensation reactions between the growing acyl-enzyme chain and the malonyl-CoA extender units. The sequence is that of Tetracenomycin polyketide synthase ketoacyl synthase beta subunit from Streptomyces glaucescens.